Here is a 353-residue protein sequence, read N- to C-terminus: Photosystem II D2 protein (353 aa).

Thr-2 is subject to N-acetylthreonine. The residue at position 2 (Thr-2) is a Phosphothreonine. Residues 41-61 traverse the membrane as a helical segment; the sequence is CAYFALGGWFTGTTFVTSWYT. His-118 lines the chlorophyll a pocket. Residues 125-141 traverse the membrane as a helical segment; the sequence is GFMLRQFELARSVQLRP. Residues Gln-130 and Asn-143 each coordinate pheophytin a. Residues 153-166 form a helical membrane-spanning segment; that stretch reads VFVSVFLIYPLGQS. Position 198 (His-198) interacts with chlorophyll a. A helical membrane pass occupies residues 208–228; sequence AALLCAIHGATVENTLFEDGD. Residues His-215 and Phe-262 each coordinate a plastoquinone. His-215 contributes to the Fe cation binding site. His-269 contributes to the Fe cation binding site. A helical membrane pass occupies residues 279–295; that stretch reads GLWMSALGVVGLALNLR.

It belongs to the reaction center PufL/M/PsbA/D family. As to quaternary structure, PSII is composed of 1 copy each of membrane proteins PsbA, PsbB, PsbC, PsbD, PsbE, PsbF, PsbH, PsbI, PsbJ, PsbK, PsbL, PsbM, PsbT, PsbX, PsbY, PsbZ, Psb30/Ycf12, at least 3 peripheral proteins of the oxygen-evolving complex and a large number of cofactors. It forms dimeric complexes. Requires The D1/D2 heterodimer binds P680, chlorophylls that are the primary electron donor of PSII, and subsequent electron acceptors. It shares a non-heme iron and each subunit binds pheophytin, quinone, additional chlorophylls, carotenoids and lipids. There is also a Cl(-1) ion associated with D1 and D2, which is required for oxygen evolution. The PSII complex binds additional chlorophylls, carotenoids and specific lipids. as cofactor.

The protein localises to the plastid. It localises to the chloroplast thylakoid membrane. The catalysed reaction is 2 a plastoquinone + 4 hnu + 2 H2O = 2 a plastoquinol + O2. Functionally, photosystem II (PSII) is a light-driven water:plastoquinone oxidoreductase that uses light energy to abstract electrons from H(2)O, generating O(2) and a proton gradient subsequently used for ATP formation. It consists of a core antenna complex that captures photons, and an electron transfer chain that converts photonic excitation into a charge separation. The D1/D2 (PsbA/PsbD) reaction center heterodimer binds P680, the primary electron donor of PSII as well as several subsequent electron acceptors. D2 is needed for assembly of a stable PSII complex. This Phaseolus vulgaris (Kidney bean) protein is Photosystem II D2 protein.